We begin with the raw amino-acid sequence, 530 residues long: tRNA-2-methylthio-N(6)-dimethylallyladenosine synthase (530 aa).

An MTTase N-terminal domain is found at 19 to 134 (RTYEVRTYGC…LPTLLERARH (116 aa)). [4Fe-4S] cluster-binding residues include C28, C63, C97, C171, C175, and C178. One can recognise a Radical SAM core domain in the interval 157–387 (RDEIASGWVS…TALQERISHE (231 aa)). The 71-residue stretch at 390–460 (QRVVGRTVEV…PFHLIADSVD (71 aa)) folds into the TRAM domain. Residues 509–530 (VPTTASTSAPVGDGSAHPRHRA) form a disordered region.

Belongs to the methylthiotransferase family. MiaB subfamily. Monomer. [4Fe-4S] cluster serves as cofactor.

It localises to the cytoplasm. The catalysed reaction is N(6)-dimethylallyladenosine(37) in tRNA + (sulfur carrier)-SH + AH2 + 2 S-adenosyl-L-methionine = 2-methylsulfanyl-N(6)-dimethylallyladenosine(37) in tRNA + (sulfur carrier)-H + 5'-deoxyadenosine + L-methionine + A + S-adenosyl-L-homocysteine + 2 H(+). Functionally, catalyzes the methylthiolation of N6-(dimethylallyl)adenosine (i(6)A), leading to the formation of 2-methylthio-N6-(dimethylallyl)adenosine (ms(2)i(6)A) at position 37 in tRNAs that read codons beginning with uridine. This Clavibacter sepedonicus (Clavibacter michiganensis subsp. sepedonicus) protein is tRNA-2-methylthio-N(6)-dimethylallyladenosine synthase.